Consider the following 413-residue polypeptide: Multifunctional CCA protein (413 aa).

ATP is bound by residues glycine 8 and arginine 11. CTP-binding residues include glycine 8 and arginine 11. Mg(2+)-binding residues include aspartate 21 and aspartate 23. ATP-binding residues include arginine 91, arginine 143, and arginine 146. Positions 91, 143, and 146 each coordinate CTP. Residues 232–333 form the HD domain; the sequence is TGVHVMMVVD…VRLFERSDAL (102 aa).

It belongs to the tRNA nucleotidyltransferase/poly(A) polymerase family. Bacterial CCA-adding enzyme type 1 subfamily. In terms of assembly, monomer. Can also form homodimers and oligomers. The cofactor is Mg(2+). Ni(2+) serves as cofactor.

It carries out the reaction a tRNA precursor + 2 CTP + ATP = a tRNA with a 3' CCA end + 3 diphosphate. The enzyme catalyses a tRNA with a 3' CCA end + 2 CTP + ATP = a tRNA with a 3' CCACCA end + 3 diphosphate. In terms of biological role, catalyzes the addition and repair of the essential 3'-terminal CCA sequence in tRNAs without using a nucleic acid template. Adds these three nucleotides in the order of C, C, and A to the tRNA nucleotide-73, using CTP and ATP as substrates and producing inorganic pyrophosphate. tRNA 3'-terminal CCA addition is required both for tRNA processing and repair. Also involved in tRNA surveillance by mediating tandem CCA addition to generate a CCACCA at the 3' terminus of unstable tRNAs. While stable tRNAs receive only 3'-terminal CCA, unstable tRNAs are marked with CCACCA and rapidly degraded. In Burkholderia lata (strain ATCC 17760 / DSM 23089 / LMG 22485 / NCIMB 9086 / R18194 / 383), this protein is Multifunctional CCA protein.